Reading from the N-terminus, the 409-residue chain is 2,3-bisphosphoglycerate-independent phosphoglycerate mutase 1 (409 aa).

The segment covering 163 to 173 has biased composition (basic and acidic residues); the sequence is SDADPKVEGKP. A disordered region spans residues 163–184; it reads SDADPKVEGKPPKKIKALDGSP.

This sequence belongs to the BPG-independent phosphoglycerate mutase family. A-PGAM subfamily.

The enzyme catalyses (2R)-2-phosphoglycerate = (2R)-3-phosphoglycerate. The protein operates within carbohydrate degradation; glycolysis; pyruvate from D-glyceraldehyde 3-phosphate: step 3/5. In terms of biological role, catalyzes the interconversion of 2-phosphoglycerate and 3-phosphoglycerate. This Methanothermobacter thermautotrophicus (strain ATCC 29096 / DSM 1053 / JCM 10044 / NBRC 100330 / Delta H) (Methanobacterium thermoautotrophicum) protein is 2,3-bisphosphoglycerate-independent phosphoglycerate mutase 1 (apgM1).